The chain runs to 636 residues: Probable potassium transport system protein Kup (636 aa).

Transmembrane regions (helical) follow at residues Val22–Tyr42, Ile64–Ile84, Leu115–Pro135, Phe150–Leu170, Leu182–Ile202, Phe220–Thr240, Trp261–Leu281, Leu293–Ile313, Ile351–Phe371, Val383–Leu403, Pro408–Ala428, and Ile433–Thr453.

It belongs to the HAK/KUP transporter (TC 2.A.72) family.

It localises to the cell inner membrane. The enzyme catalyses K(+)(in) + H(+)(in) = K(+)(out) + H(+)(out). In terms of biological role, transport of potassium into the cell. Likely operates as a K(+):H(+) symporter. The protein is Probable potassium transport system protein Kup of Pseudomonas putida (strain ATCC 700007 / DSM 6899 / JCM 31910 / BCRC 17059 / LMG 24140 / F1).